A 195-amino-acid chain; its full sequence is MIRGGGSPSPYPSVPNPSAGLKRQCAVGAPRKSVMSQTGRDDPQSLDSQLCFAVYAAAHAFGRAYRSLLAHHELTYPQYLVLLVLWEEEGLSVKEIGSRLFLDSGTLTPLLKRLEASGHVRRARDRPDERQVSIFLTDKGRGLKGKMDCLPHTVGGMTGMTLDERRALLDNLASMRDELHARAGSTELPAANASR.

Residues 47 to 177 (DSQLCFAVYA…LLDNLASMRD (131 aa)) form the HTH marR-type domain. The H-T-H motif DNA-binding region spans 93–116 (VKEIGSRLFLDSGTLTPLLKRLEA).

It localises to the cytoplasm. Its function is as follows. Formaldehyde-responsive transcription factor that modulates resistance to stress induced by formaldehyde. Impacts the expression of a number of genes encoding transcription factors and/or involved in stress response, including efgA, and which probably collectively trigger a formaldehyde-specific physiological response. Required for optimal transition to methylotrophy. Not involved in a general stress response. This chain is HTH-type transcriptional regulator TtmR, found in Methylorubrum extorquens (strain PA1) (Methylobacterium extorquens).